We begin with the raw amino-acid sequence, 262 residues long: Putative BTB/POZ domain-containing protein L834 (262 aa).

Positions phenylalanine 16–isoleucine 86 constitute a BTB domain.

Belongs to the mimivirus BTB/WD family.

This Acanthamoeba polyphaga (Amoeba) protein is Putative BTB/POZ domain-containing protein L834.